The sequence spans 213 residues: Small ribosomal subunit protein uS7 (213 aa).

Belongs to the universal ribosomal protein uS7 family. Component of the small ribosomal subunit (SSU). Mature N.crassa ribosomes consist of a small (40S) and a large (60S) subunit. The 40S small subunit contains 1 molecule of ribosomal RNA (18S rRNA) and at least 32 different proteins. The large 60S subunit contains 3 rRNA molecules (26S, 5.8S and 5S rRNA) and at least 42 different proteins.

The protein localises to the cytoplasm. Functionally, component of the ribosome, a large ribonucleoprotein complex responsible for the synthesis of proteins in the cell. The small ribosomal subunit (SSU) binds messenger RNAs (mRNAs) and translates the encoded message by selecting cognate aminoacyl-transfer RNA (tRNA) molecules. The large subunit (LSU) contains the ribosomal catalytic site termed the peptidyl transferase center (PTC), which catalyzes the formation of peptide bonds, thereby polymerizing the amino acids delivered by tRNAs into a polypeptide chain. The nascent polypeptides leave the ribosome through a tunnel in the LSU and interact with protein factors that function in enzymatic processing, targeting, and the membrane insertion of nascent chains at the exit of the ribosomal tunnel. The polypeptide is Small ribosomal subunit protein uS7 (rps-5) (Neurospora crassa (strain ATCC 24698 / 74-OR23-1A / CBS 708.71 / DSM 1257 / FGSC 987)).